A 176-amino-acid polypeptide reads, in one-letter code: MSTEEKKIILGKVGAVYGIKGWLKIHSFTDETEAILDYFPWSLKLGNNTQTVEITDWRKHNKVLIVKVAGIDDRDEAQALVGSEILTNEAALPELSEDDFYWRDLIGMSVVTNKGYDLGVVTDMMETGANDVLVVKANLKDGFSKKERLIPYLFEQVIESVSIENKQICVDWDPGF.

A PRC barrel domain is found at 97 to 176 (EDDFYWRDLI…QICVDWDPGF (80 aa)).

It belongs to the RimM family. Binds ribosomal protein uS19.

It localises to the cytoplasm. In terms of biological role, an accessory protein needed during the final step in the assembly of 30S ribosomal subunit, possibly for assembly of the head region. Essential for efficient processing of 16S rRNA. May be needed both before and after RbfA during the maturation of 16S rRNA. It has affinity for free ribosomal 30S subunits but not for 70S ribosomes. The polypeptide is Ribosome maturation factor RimM (Colwellia psychrerythraea (strain 34H / ATCC BAA-681) (Vibrio psychroerythus)).